The sequence spans 353 residues: C-C chemokine receptor type 8 (353 aa).

Topologically, residues 1–33 (MDYTMEPNVTMTDYYPDFFTAPCDAEFLLRGSM) are extracellular. An N-linked (GlcNAc...) asparagine glycan is attached at N8. A helical membrane pass occupies residues 34–61 (LYLAILYCVLFVLGLLGNSLVILVLVGC). The Cytoplasmic segment spans residues 62-71 (KKLRSITDIY). The helical transmembrane segment at 72–91 (LLNLAASDLLFVLSIPFQTH) threads the bilayer. At 92-105 (NLLDQWVFGTAMCK) the chain is on the extracellular side. A disulfide bridge connects residues C104 and C181. A helical transmembrane segment spans residues 106 to 127 (VVSGLYYIGFFSSMFFITLMSV). Residues 128 to 144 (DRYLAIVHAVYAIKVRT) lie on the Cytoplasmic side of the membrane. The chain crosses the membrane as a helical span at residues 145–169 (ASVGTALSLTVWLAAVTATIPLMVF). Residues 170 to 200 (YQVASEDGMLQCFQFYEEQSLRWKLFTHFEI) are Extracellular-facing. The chain crosses the membrane as a helical span at residues 201–220 (NALGLLLPFAILLFCYVRIL). At 221-236 (QQLRGCLNHNRTRAIK) the chain is on the cytoplasmic side. The helical transmembrane segment at 237–261 (LVLTVVIVSLLFWVPFNVALFLTSL) threads the bilayer. Over 262–278 (HDLHILDGCATRQRLAL) the chain is Extracellular. The chain crosses the membrane as a helical span at residues 279–302 (AIHVTEVISFTHCCVNPVIYAFIG). Over 303–353 (EKFKKHLMDVFQKSCSHIFLYLGRQMPVGALERQLSSNQRSSHSSTLDDIL) the chain is Cytoplasmic.

This sequence belongs to the G-protein coupled receptor 1 family. Expressed in thymus.

It is found in the cell membrane. Its function is as follows. Receptor for the CCL1/SCY1/TCA-3 chemokine. The protein is C-C chemokine receptor type 8 (Ccr8) of Mus musculus (Mouse).